The chain runs to 388 residues: MKRNFPKLIALSLIFSLSITPIANAESNSNIKAKDKRHVQVNVEDKSVPTDVRNLAQKDYLSYVTSLDKIYNKEKASYTLGEPFKIYKFNKKSDGNYYFPVLNTEGNIDYIVTISPKVTKDSSSSSKYTINVSSFLSKALNEYKDQQITILTNSKGYYVVTQNHKAKLVLKTPRLEDKKAKKTESIPTGNNVTQLKQKASVTMPTSQFKSNNYTYNEQYVNKLENFKIRETQGNNGWCAGYTMSALLNATYNTNKYHAEAVMRFLHPNLQGQQFQFTGLTPREMIYFGQTQGRSPQLLNRMTTYNEVDNLTKNNKGIAILGSRVESRNGMHAGHAMAVVGNAKLNNGQEVIIIWNPWDNGFMTQDAKNNVIPVSNGDHYQWYSSIYGY.

The first 25 residues, 1–25, serve as a signal peptide directing secretion; that stretch reads MKRNFPKLIALSLIFSLSITPIANA. Positions 26–214 are excised as a propeptide; sequence ESNSNIKAKD…TSQFKSNNYT (189 aa). Active-site residues include Cys238, His334, and Asn355.

It belongs to the peptidase C47 family. As to quaternary structure, in the cytoplasm, prematurely activated/folded ScpA forms a stable non-covalent complex with ScpB. Post-translationally, cleavage leads to the activation of ScpA probably by an auto-catalytic manner.

Its subcellular location is the secreted. The enzyme catalyses Broad endopeptidase action on proteins including elastin, but rather limited hydrolysis of small-molecule substrates. Assays are conveniently made with hemoglobin, casein or Z-Phe-Arg-NHMec as substrate.. With respect to regulation, prematurely activated/folded staphopain A is inhibited by staphostatin A (ScpB), which is probably required to protect staphylococcal cytoplasmic proteins from degradation by ScpA. In terms of biological role, cysteine protease that plays an important role in the inhibition of host innate immune response. Cleaves host elastins found in connective tissues, pulmonary surfactant protein A in the lungs, and the chemokine receptor CXCR2 on leukocytes. Proteolytic cleavage of surfactant protein A impairs bacterial phagocytosis by neutrophils while CXCR2 degradation blocks neutrophil activation and chemotaxis. Additionally, promotes vascular leakage by activating the plasma kallikerin/kinin system, resulting in hypotension. The chain is Staphopain A (sspP) from Staphylococcus aureus (strain MRSA252).